The sequence spans 331 residues: Tetraacyldisaccharide 4'-kinase (331 aa).

58–65 (TVGGSGKT) contributes to the ATP binding site.

Belongs to the LpxK family.

It catalyses the reaction a lipid A disaccharide + ATP = a lipid IVA + ADP + H(+). Its pathway is glycolipid biosynthesis; lipid IV(A) biosynthesis; lipid IV(A) from (3R)-3-hydroxytetradecanoyl-[acyl-carrier-protein] and UDP-N-acetyl-alpha-D-glucosamine: step 6/6. Transfers the gamma-phosphate of ATP to the 4'-position of a tetraacyldisaccharide 1-phosphate intermediate (termed DS-1-P) to form tetraacyldisaccharide 1,4'-bis-phosphate (lipid IVA). This chain is Tetraacyldisaccharide 4'-kinase, found in Shewanella denitrificans (strain OS217 / ATCC BAA-1090 / DSM 15013).